The chain runs to 388 residues: Arginine biosynthesis bifunctional protein ArgJ (388 aa).

Residues Thr150, Lys172, Thr183, Glu263, Asn383, and Thr388 each contribute to the substrate site. Thr183 (nucleophile) is an active-site residue.

Belongs to the ArgJ family. In terms of assembly, heterotetramer of two alpha and two beta chains.

Its subcellular location is the cytoplasm. It carries out the reaction N(2)-acetyl-L-ornithine + L-glutamate = N-acetyl-L-glutamate + L-ornithine. The enzyme catalyses L-glutamate + acetyl-CoA = N-acetyl-L-glutamate + CoA + H(+). It functions in the pathway amino-acid biosynthesis; L-arginine biosynthesis; L-ornithine and N-acetyl-L-glutamate from L-glutamate and N(2)-acetyl-L-ornithine (cyclic): step 1/1. The protein operates within amino-acid biosynthesis; L-arginine biosynthesis; N(2)-acetyl-L-ornithine from L-glutamate: step 1/4. Catalyzes two activities which are involved in the cyclic version of arginine biosynthesis: the synthesis of N-acetylglutamate from glutamate and acetyl-CoA as the acetyl donor, and of ornithine by transacetylation between N(2)-acetylornithine and glutamate. This chain is Arginine biosynthesis bifunctional protein ArgJ, found in Corynebacterium efficiens (strain DSM 44549 / YS-314 / AJ 12310 / JCM 11189 / NBRC 100395).